A 478-amino-acid chain; its full sequence is MSATINPVVDNSVFTDCKVADLSLADWGRKEIAIAETEMPGLMALREQYADKKPLAGARIAGSLHMTIQTAVLIETLVALGAEVRWASCNIFSTQDHAAAAIAARNIPVFAYKGESLEEYWDYAHQIFEWASDGSHTANMILDDGGDATLLLILGSKAERDPSVIANPTNEEEQVLFASIRSRLASHPGWYSRNLAAIRGVTEETTTGVHRLYEMEKKGELPFPAINVNDSVTKSKFDNLYGCRESLVDGIKRATDVMIAGKIAVVCGYGDVGKGCAQSLRGLGATVWITEIDPICALQAAMEGYRVVTMDDACDKADIFVTATGNLRVITHDHMLKMKDQSIICNIGHFDSEIDIASVQKYQWENIKPQVDHVIFPTGRRIIVLAQGRLVNLGCATGHPSFVMSSSFTNQVLAQIELWQNGKDYQKKVYVLPKRLDEMVARLHLGKLGVKLTELTDEQAHYLNLDKNGPYKPEMYRY.

Residues T67, D144, and E204 each contribute to the substrate site. Residue T205 to T207 coordinates NAD(+). Positions 234 and 238 each coordinate substrate. Residues N239, G268–G273, E291, N326, I347–H349, and N392 each bind NAD(+).

The protein belongs to the adenosylhomocysteinase family. NAD(+) is required as a cofactor.

The protein localises to the cytoplasm. It catalyses the reaction S-adenosyl-L-homocysteine + H2O = L-homocysteine + adenosine. Its pathway is amino-acid biosynthesis; L-homocysteine biosynthesis; L-homocysteine from S-adenosyl-L-homocysteine: step 1/1. In terms of biological role, may play a key role in the regulation of the intracellular concentration of adenosylhomocysteine. This Nitrosomonas europaea (strain ATCC 19718 / CIP 103999 / KCTC 2705 / NBRC 14298) protein is Adenosylhomocysteinase.